A 188-amino-acid chain; its full sequence is Elongation factor P (188 aa).

The protein belongs to the elongation factor P family.

It localises to the cytoplasm. It functions in the pathway protein biosynthesis; polypeptide chain elongation. Functionally, involved in peptide bond synthesis. Stimulates efficient translation and peptide-bond synthesis on native or reconstituted 70S ribosomes in vitro. Probably functions indirectly by altering the affinity of the ribosome for aminoacyl-tRNA, thus increasing their reactivity as acceptors for peptidyl transferase. In Rhodopseudomonas palustris (strain ATCC BAA-98 / CGA009), this protein is Elongation factor P.